Reading from the N-terminus, the 149-residue chain is Large ribosomal subunit protein uL22 (149 aa).

It belongs to the universal ribosomal protein uL22 family. Part of the 50S ribosomal subunit.

This protein binds specifically to 23S rRNA. It makes multiple contacts with different domains of the 23S rRNA in the assembled 50S subunit and ribosome. In terms of biological role, the globular domain of the protein is located near the polypeptide exit tunnel on the outside of the subunit, while an extended beta-hairpin is found that lines the wall of the exit tunnel in the center of the 70S ribosome. The chain is Large ribosomal subunit protein uL22 from Picrophilus torridus (strain ATCC 700027 / DSM 9790 / JCM 10055 / NBRC 100828 / KAW 2/3).